Here is a 1041-residue protein sequence, read N- to C-terminus: Probable rhamnogalacturonate lyase C (1041 aa).

An N-terminal signal peptide occupies residues 1–21 (MFASTLRKTFVFLGLATYSAA). Residues Asn-28, Asn-94, Asn-116, Asn-142, Asn-231, Asn-283, Asn-528, and Asn-634 are each glycosylated (N-linked (GlcNAc...) asparagine). A disordered region spans residues 703 to 728 (ISRPCPRKGGTRRRKKERKKEGKKQG). Residues 707–720 (CPRKGGTRRRKKER) show a composition bias toward basic residues. Asn-864 carries N-linked (GlcNAc...) asparagine glycosylation.

Belongs to the polysaccharide lyase 4 family.

The protein resides in the secreted. The enzyme catalyses Endotype eliminative cleavage of L-alpha-rhamnopyranosyl-(1-&gt;4)-alpha-D-galactopyranosyluronic acid bonds of rhamnogalacturonan I domains in ramified hairy regions of pectin leaving L-rhamnopyranose at the reducing end and 4-deoxy-4,5-unsaturated D-galactopyranosyluronic acid at the non-reducing end.. Its function is as follows. Pectinolytic enzymes consist of four classes of enzymes: pectin lyase, polygalacturonase, pectin methylesterase and rhamnogalacturonase. Degrades the rhamnogalacturonan I (RG-I) backbone of pectin. The protein is Probable rhamnogalacturonate lyase C (rglC) of Emericella nidulans (strain FGSC A4 / ATCC 38163 / CBS 112.46 / NRRL 194 / M139) (Aspergillus nidulans).